A 339-amino-acid chain; its full sequence is Phosphate acyltransferase (339 aa).

It belongs to the PlsX family. Homodimer. Probably interacts with PlsY.

It is found in the cytoplasm. The enzyme catalyses a fatty acyl-[ACP] + phosphate = an acyl phosphate + holo-[ACP]. The protein operates within lipid metabolism; phospholipid metabolism. Catalyzes the reversible formation of acyl-phosphate (acyl-PO(4)) from acyl-[acyl-carrier-protein] (acyl-ACP). This enzyme utilizes acyl-ACP as fatty acyl donor, but not acyl-CoA. The sequence is that of Phosphate acyltransferase from Moorella thermoacetica (strain ATCC 39073 / JCM 9320).